The primary structure comprises 446 residues: Argininosuccinate lyase (446 aa).

The protein belongs to the lyase 1 family. Argininosuccinate lyase subfamily.

The protein resides in the cytoplasm. It catalyses the reaction 2-(N(omega)-L-arginino)succinate = fumarate + L-arginine. It participates in amino-acid biosynthesis; L-arginine biosynthesis; L-arginine from L-ornithine and carbamoyl phosphate: step 3/3. The chain is Argininosuccinate lyase from Phocaeicola vulgatus (strain ATCC 8482 / DSM 1447 / JCM 5826 / CCUG 4940 / NBRC 14291 / NCTC 11154) (Bacteroides vulgatus).